The chain runs to 321 residues: Lipoyl synthase (321 aa).

C68, C73, C79, C94, C98, C101, and S308 together coordinate [4Fe-4S] cluster. The Radical SAM core domain maps to 80–297 (FNHGTATFMI…KALADELGFT (218 aa)).

This sequence belongs to the radical SAM superfamily. Lipoyl synthase family. The cofactor is [4Fe-4S] cluster.

It localises to the cytoplasm. The catalysed reaction is [[Fe-S] cluster scaffold protein carrying a second [4Fe-4S](2+) cluster] + N(6)-octanoyl-L-lysyl-[protein] + 2 oxidized [2Fe-2S]-[ferredoxin] + 2 S-adenosyl-L-methionine + 4 H(+) = [[Fe-S] cluster scaffold protein] + N(6)-[(R)-dihydrolipoyl]-L-lysyl-[protein] + 4 Fe(3+) + 2 hydrogen sulfide + 2 5'-deoxyadenosine + 2 L-methionine + 2 reduced [2Fe-2S]-[ferredoxin]. The protein operates within protein modification; protein lipoylation via endogenous pathway; protein N(6)-(lipoyl)lysine from octanoyl-[acyl-carrier-protein]: step 2/2. Catalyzes the radical-mediated insertion of two sulfur atoms into the C-6 and C-8 positions of the octanoyl moiety bound to the lipoyl domains of lipoate-dependent enzymes, thereby converting the octanoylated domains into lipoylated derivatives. The chain is Lipoyl synthase from Shewanella frigidimarina (strain NCIMB 400).